The sequence spans 666 residues: DNA mismatch repair protein MutL (666 aa).

It belongs to the DNA mismatch repair MutL/HexB family.

This protein is involved in the repair of mismatches in DNA. It is required for dam-dependent methyl-directed DNA mismatch repair. May act as a 'molecular matchmaker', a protein that promotes the formation of a stable complex between two or more DNA-binding proteins in an ATP-dependent manner without itself being part of a final effector complex. The protein is DNA mismatch repair protein MutL of Clostridium botulinum (strain ATCC 19397 / Type A).